The following is a 227-amino-acid chain: Phosphatidylserine decarboxylase proenzyme (227 aa).

Ser-184 acts as the Schiff-base intermediate with substrate; via pyruvic acid in catalysis. Ser-184 bears the Pyruvic acid (Ser); by autocatalysis mark.

The protein belongs to the phosphatidylserine decarboxylase family. PSD-A subfamily. Heterodimer of a large membrane-associated beta subunit and a small pyruvoyl-containing alpha subunit. It depends on pyruvate as a cofactor. Is synthesized initially as an inactive proenzyme. Formation of the active enzyme involves a self-maturation process in which the active site pyruvoyl group is generated from an internal serine residue via an autocatalytic post-translational modification. Two non-identical subunits are generated from the proenzyme in this reaction, and the pyruvate is formed at the N-terminus of the alpha chain, which is derived from the carboxyl end of the proenzyme. The post-translation cleavage follows an unusual pathway, termed non-hydrolytic serinolysis, in which the side chain hydroxyl group of the serine supplies its oxygen atom to form the C-terminus of the beta chain, while the remainder of the serine residue undergoes an oxidative deamination to produce ammonia and the pyruvoyl prosthetic group on the alpha chain.

It localises to the cell membrane. It catalyses the reaction a 1,2-diacyl-sn-glycero-3-phospho-L-serine + H(+) = a 1,2-diacyl-sn-glycero-3-phosphoethanolamine + CO2. Its pathway is phospholipid metabolism; phosphatidylethanolamine biosynthesis; phosphatidylethanolamine from CDP-diacylglycerol: step 2/2. Catalyzes the formation of phosphatidylethanolamine (PtdEtn) from phosphatidylserine (PtdSer). The protein is Phosphatidylserine decarboxylase proenzyme of Ehrlichia ruminantium (strain Welgevonden).